A 95-amino-acid chain; its full sequence is Large ribosomal subunit protein uL23 (95 aa).

Belongs to the universal ribosomal protein uL23 family. In terms of assembly, part of the 50S ribosomal subunit. Contacts protein L29, and trigger factor when it is bound to the ribosome.

Its function is as follows. One of the early assembly proteins it binds 23S rRNA. One of the proteins that surrounds the polypeptide exit tunnel on the outside of the ribosome. Forms the main docking site for trigger factor binding to the ribosome. This Bacillus licheniformis (strain ATCC 14580 / DSM 13 / JCM 2505 / CCUG 7422 / NBRC 12200 / NCIMB 9375 / NCTC 10341 / NRRL NRS-1264 / Gibson 46) protein is Large ribosomal subunit protein uL23.